The sequence spans 461 residues: Photosystem II CP43 reaction center protein (461 aa).

Positions 1 to 2 (ME) are excised as a propeptide. Threonine 3 bears the N-acetylthreonine mark. Position 3 is a phosphothreonine (threonine 3). A run of 5 helical transmembrane segments spans residues 57–81 (LFEVAHFVPEKPMYEQGLILLPHLA), 122–143 (LLGPETLEESFPFFGYVWKDRN), 166–188 (KALYFGGVYDTWAPGGGDVRKIS), 243–263 (KPFAWARRALVWSGEAYLSYS), and 279–300 (WFNNTAYPSEFYGPTGPEASQA). Glutamate 355 provides a ligand contact to [CaMn4O5] cluster. A helical transmembrane segment spans residues 435-459 (RARAAAAGFEKGIDRDFEPVLSMTP).

The protein belongs to the PsbB/PsbC family. PsbC subfamily. PSII is composed of 1 copy each of membrane proteins PsbA, PsbB, PsbC, PsbD, PsbE, PsbF, PsbH, PsbI, PsbJ, PsbK, PsbL, PsbM, PsbT, PsbX, PsbY, PsbZ, Psb30/Ycf12, at least 3 peripheral proteins of the oxygen-evolving complex and a large number of cofactors. It forms dimeric complexes. Binds multiple chlorophylls and provides some of the ligands for the Ca-4Mn-5O cluster of the oxygen-evolving complex. It may also provide a ligand for a Cl- that is required for oxygen evolution. PSII binds additional chlorophylls, carotenoids and specific lipids. serves as cofactor.

Its subcellular location is the plastid. The protein localises to the chloroplast thylakoid membrane. In terms of biological role, one of the components of the core complex of photosystem II (PSII). It binds chlorophyll and helps catalyze the primary light-induced photochemical processes of PSII. PSII is a light-driven water:plastoquinone oxidoreductase, using light energy to abstract electrons from H(2)O, generating O(2) and a proton gradient subsequently used for ATP formation. This Trachelium caeruleum (Blue throatwort) protein is Photosystem II CP43 reaction center protein.